The sequence spans 206 residues: Ribonuclease HII (206 aa).

In terms of domain architecture, RNase H type-2 spans 22–206 (RFICGVDEAG…ISFLKNILSL (185 aa)). The a divalent metal cation site is built by D28, E29, and D120.

It belongs to the RNase HII family. Requires Mn(2+) as cofactor. The cofactor is Mg(2+).

The protein resides in the cytoplasm. The catalysed reaction is Endonucleolytic cleavage to 5'-phosphomonoester.. Endonuclease that specifically degrades the RNA of RNA-DNA hybrids. The protein is Ribonuclease HII of Caldicellulosiruptor bescii (strain ATCC BAA-1888 / DSM 6725 / KCTC 15123 / Z-1320) (Anaerocellum thermophilum).